The sequence spans 186 residues: Threonylcarbamoyl-AMP synthase (186 aa).

Residues 3–186 (ILSLSECVDR…IINGSLIRHG (184 aa)) enclose the YrdC-like domain.

This sequence belongs to the SUA5 family. TsaC subfamily.

The protein resides in the cytoplasm. The catalysed reaction is L-threonine + hydrogencarbonate + ATP = L-threonylcarbamoyladenylate + diphosphate + H2O. In terms of biological role, required for the formation of a threonylcarbamoyl group on adenosine at position 37 (t(6)A37) in tRNAs that read codons beginning with adenine. Catalyzes the conversion of L-threonine, HCO(3)(-)/CO(2) and ATP to give threonylcarbamoyl-AMP (TC-AMP) as the acyladenylate intermediate, with the release of diphosphate. The sequence is that of Threonylcarbamoyl-AMP synthase from Buchnera aphidicola subsp. Baizongia pistaciae (strain Bp).